A 163-amino-acid chain; its full sequence is Cytochrome c-type biogenesis protein CcmE (163 aa).

Topologically, residues 1-8 (MNPRRKKR) are cytoplasmic. The helical; Signal-anchor for type II membrane protein transmembrane segment at 9-29 (LTIILAISAGLAAVIGLVLYA) threads the bilayer. The Periplasmic portion of the chain corresponds to 30–163 (LSQNIDLFYT…TEAQLKGAKQ (134 aa)). Heme contacts are provided by His131 and Tyr135.

Belongs to the CcmE/CycJ family.

It localises to the cell inner membrane. Heme chaperone required for the biogenesis of c-type cytochromes. Transiently binds heme delivered by CcmC and transfers the heme to apo-cytochromes in a process facilitated by CcmF and CcmH. In Aeromonas salmonicida (strain A449), this protein is Cytochrome c-type biogenesis protein CcmE.